A 195-amino-acid polypeptide reads, in one-letter code: Probable GTP-binding protein EngB (195 aa).

An EngB-type G domain is found at 22–195 (GLPEIALAGR…WGAIKKMISR (174 aa)). GTP contacts are provided by residues 30–37 (GRSNVGKS), 57–61 (GKTQT), 75–78 (DVPG), 142–145 (TKAD), and 174–176 (FSS). 2 residues coordinate Mg(2+): S37 and T59.

It belongs to the TRAFAC class TrmE-Era-EngA-EngB-Septin-like GTPase superfamily. EngB GTPase family. It depends on Mg(2+) as a cofactor.

Functionally, necessary for normal cell division and for the maintenance of normal septation. The polypeptide is Probable GTP-binding protein EngB (Bacillus velezensis (strain DSM 23117 / BGSC 10A6 / LMG 26770 / FZB42) (Bacillus amyloliquefaciens subsp. plantarum)).